A 530-amino-acid polypeptide reads, in one-letter code: MSQLDTTTPSGDYLMALDAGTGSVRAVIFDLNGNQIAAGQAEWLHLPVPDVPGSMEFDLTTNWQLTCQCIRQALHLAKLPASAIRAVAACSMREGIVLYDRSGTPIWACANVDARASREVSELKELHNNGFELEVYQCSGQTLALSAMPRLLWLAHYRPDIYRQAGTLTMISDWLANMLSGELAVDPSNAGTTGMLDLVTRNWQPNLLEMAGLRADILSPVKETGTLLGHVTAKAAQECGLLAGTPVVMGGGDVQLGCLGLGVVHAGQTAVLGGTFWQQVVNLPQPIIDPNMNTRINPHVIPGMVQAESISFFTGLTMRWFRDAFCAEEKLLAQRLGIDTYSLLEDMAARVPAGAYGVMPIFSDVMRFKSWYHAAPSFINLSLDPEKCNKATLFRALEENAAIVSACNLAQIAEFSGVKASSVVFAGGGAKGKLWSQILADVTGVPVKVPVVKEATALGCAIAAGVGVGLYEALDKTGERLVRWEREYIPNTEHKALYQAAKTNWQAVYTDQLGLVDCGLTTSLWKAPGL.

It belongs to the FGGY kinase family.

Its subcellular location is the cytoplasm. The catalysed reaction is (S)-4,5-dihydroxypentane-2,3-dione + ATP = (2S)-2-hydroxy-3,4-dioxopentyl phosphate + ADP + H(+). Its function is as follows. Catalyzes the phosphorylation of autoinducer-2 (AI-2) to phospho-AI-2, which subsequently inactivates the transcriptional regulator LsrR and leads to the transcription of the lsr operon. Phosphorylates the ring-open form of (S)-4,5-dihydroxypentane-2,3-dione (DPD), which is the precursor to all AI-2 signaling molecules, at the C5 position. The protein is Autoinducer-2 kinase of Yersinia pseudotuberculosis serotype O:1b (strain IP 31758).